A 101-amino-acid polypeptide reads, in one-letter code: Small ribosomal subunit protein uS14 (101 aa).

The protein belongs to the universal ribosomal protein uS14 family. In terms of assembly, part of the 30S ribosomal subunit. Contacts proteins S3 and S10.

Functionally, binds 16S rRNA, required for the assembly of 30S particles and may also be responsible for determining the conformation of the 16S rRNA at the A site. The polypeptide is Small ribosomal subunit protein uS14 (Chlamydia trachomatis serovar L2 (strain ATCC VR-902B / DSM 19102 / 434/Bu)).